A 140-amino-acid polypeptide reads, in one-letter code: Probable transport accessory protein MmpS4 (140 aa).

Residues 2–22 (LMRTWIPLVILVVVIVGGFTV) traverse the membrane as a helical segment.

This sequence belongs to the MmpS family.

The protein localises to the cell membrane. The sequence is that of Probable transport accessory protein MmpS4 (mmpS4) from Mycobacterium bovis (strain ATCC BAA-935 / AF2122/97).